The primary structure comprises 292 residues: Peroxisomal 2,4-dienoyl-CoA reductase SPS19 [(3E)-enoyl-CoA-producing] (292 aa).

Residues I36, D85, and K145 each coordinate NADP(+). S162 functions as the Proton donor in the catalytic mechanism. Residue K180 participates in NADP(+) binding. K180 acts as the Lowers pKa of active site Tyr in catalysis. K188 is covalently cross-linked (Glycyl lysine isopeptide (Lys-Gly) (interchain with G-Cter in ubiquitin)). Residue I209 coordinates NADP(+). The Microbody targeting signal signature appears at 290 to 292; the sequence is SKL.

It belongs to the short-chain dehydrogenases/reductases (SDR) family. In terms of assembly, homodimer.

The protein resides in the peroxisome. The catalysed reaction is a (2E,4Z)-dienoyl-CoA + NADPH + H(+) = a 4,5-saturated-(3E)-enoyl-CoA + NADP(+). It catalyses the reaction a (2E,4E)-dienoyl-CoA + NADPH + H(+) = a 4,5-saturated-(3E)-enoyl-CoA + NADP(+). Auxiliary enzyme of beta-oxidation. Participates in the degradation of unsaturated fatty enoyl-CoA esters having double bonds in both even- and odd-numbered positions in peroxisome. Catalyzes the NADP-dependent reduction of 2,4-dienoyl-CoA to yield trans-3-enoyl-CoA. Dispensable for growth and sporulation on solid acetate and oleate media, but is essential for these processes to occur on petroselineate. The chain is Peroxisomal 2,4-dienoyl-CoA reductase SPS19 [(3E)-enoyl-CoA-producing] (SPS19) from Saccharomyces cerevisiae (strain ATCC 204508 / S288c) (Baker's yeast).